Here is a 151-residue protein sequence, read N- to C-terminus: ATP synthase subunit b' (151 aa).

A helical membrane pass occupies residues 18–38; sequence TLPLMALQVVLLTFILNALFF.

It belongs to the ATPase B chain family. As to quaternary structure, F-type ATPases have 2 components, F(1) - the catalytic core - and F(0) - the membrane proton channel. F(1) has five subunits: alpha(3), beta(3), gamma(1), delta(1), epsilon(1). F(0) has four main subunits: a(1), b(1), b'(1) and c(10-14). The alpha and beta chains form an alternating ring which encloses part of the gamma chain. F(1) is attached to F(0) by a central stalk formed by the gamma and epsilon chains, while a peripheral stalk is formed by the delta, b and b' chains.

It localises to the cellular thylakoid membrane. In terms of biological role, f(1)F(0) ATP synthase produces ATP from ADP in the presence of a proton or sodium gradient. F-type ATPases consist of two structural domains, F(1) containing the extramembraneous catalytic core and F(0) containing the membrane proton channel, linked together by a central stalk and a peripheral stalk. During catalysis, ATP synthesis in the catalytic domain of F(1) is coupled via a rotary mechanism of the central stalk subunits to proton translocation. Its function is as follows. Component of the F(0) channel, it forms part of the peripheral stalk, linking F(1) to F(0). The b'-subunit is a diverged and duplicated form of b found in plants and photosynthetic bacteria. This Prochlorococcus marinus (strain MIT 9303) protein is ATP synthase subunit b'.